A 67-amino-acid polypeptide reads, in one-letter code: DNA-directed RNA polymerase subunit omega (67 aa).

Belongs to the RNA polymerase subunit omega family. As to quaternary structure, the RNAP catalytic core consists of 2 alpha, 1 beta, 1 beta' and 1 omega subunit. When a sigma factor is associated with the core the holoenzyme is formed, which can initiate transcription.

The catalysed reaction is RNA(n) + a ribonucleoside 5'-triphosphate = RNA(n+1) + diphosphate. Promotes RNA polymerase assembly. Latches the N- and C-terminal regions of the beta' subunit thereby facilitating its interaction with the beta and alpha subunits. The chain is DNA-directed RNA polymerase subunit omega from Exiguobacterium sibiricum (strain DSM 17290 / CCUG 55495 / CIP 109462 / JCM 13490 / 255-15).